Consider the following 272-residue polypeptide: 5'-nucleotidase SurE (272 aa).

Residues D8, D9, S39, and N96 each coordinate a divalent metal cation.

The protein belongs to the SurE nucleotidase family. Requires a divalent metal cation as cofactor.

The protein resides in the cytoplasm. The catalysed reaction is a ribonucleoside 5'-phosphate + H2O = a ribonucleoside + phosphate. Functionally, nucleotidase that shows phosphatase activity on nucleoside 5'-monophosphates. The protein is 5'-nucleotidase SurE of Heliobacterium modesticaldum (strain ATCC 51547 / Ice1).